The primary structure comprises 321 residues: Transaldolase (321 aa).

Residue K132 is the Schiff-base intermediate with substrate of the active site.

The protein belongs to the transaldolase family. Type 1 subfamily. In terms of assembly, homodimer.

It is found in the cytoplasm. It catalyses the reaction D-sedoheptulose 7-phosphate + D-glyceraldehyde 3-phosphate = D-erythrose 4-phosphate + beta-D-fructose 6-phosphate. It functions in the pathway carbohydrate degradation; pentose phosphate pathway; D-glyceraldehyde 3-phosphate and beta-D-fructose 6-phosphate from D-ribose 5-phosphate and D-xylulose 5-phosphate (non-oxidative stage): step 2/3. Its function is as follows. Transaldolase is important for the balance of metabolites in the pentose-phosphate pathway. This chain is Transaldolase, found in Rhizobium rhizogenes (strain K84 / ATCC BAA-868) (Agrobacterium radiobacter).